Reading from the N-terminus, the 60-residue chain is Metallothionein A (60 aa).

The interval 1–28 (MDPCDCSKSGTCNCGGSCTCTNCSCKSC) is beta. Residues cysteine 4, cysteine 6, cysteine 12, cysteine 14, cysteine 18, cysteine 20, cysteine 23, cysteine 25, cysteine 28, cysteine 32, cysteine 33, cysteine 35, cysteine 36, cysteine 40, cysteine 43, cysteine 47, cysteine 49, cysteine 54, cysteine 58, and cysteine 59 each contribute to the a divalent metal cation site. The interval 29-60 (KKSCCPCCPSGCTKCASGCVCKGKTCDTSCCQ) is alpha.

The protein belongs to the metallothionein superfamily. Type 1 family.

Metallothioneins have a high content of cysteine residues that bind various heavy metals. This chain is Metallothionein A (mta), found in Chionodraco hamatus (Antarctic teleost icefish).